We begin with the raw amino-acid sequence, 118 residues long: DNA-binding protein YG5714_1868 (118 aa).

Belongs to the PDCD5 family.

The polypeptide is DNA-binding protein YG5714_1868 (Saccharolobus islandicus (strain Y.G.57.14 / Yellowstone #1) (Sulfolobus islandicus)).